The chain runs to 256 residues: Adenosylcobinamide-GDP ribazoletransferase (256 aa).

Transmembrane regions (helical) follow at residues 40-60 (YFPLIGWLVGAVAAAVYWLVL), 64-84 (PAQGVAVAVSMGATLLLTGAF), 114-134 (IGAFGAIAVCMALLLKWQLLS), 143-163 (ILVAMVAAHAASRAAAVSHLL), 194-214 (VVPLLWFGPMCAALIVVGLIL), and 234-254 (CLGMAQQIFELLILWGLLAWM).

The protein belongs to the CobS family. Mg(2+) serves as cofactor.

Its subcellular location is the cell inner membrane. It carries out the reaction alpha-ribazole + adenosylcob(III)inamide-GDP = adenosylcob(III)alamin + GMP + H(+). The catalysed reaction is alpha-ribazole 5'-phosphate + adenosylcob(III)inamide-GDP = adenosylcob(III)alamin 5'-phosphate + GMP + H(+). It functions in the pathway cofactor biosynthesis; adenosylcobalamin biosynthesis; adenosylcobalamin from cob(II)yrinate a,c-diamide: step 7/7. Joins adenosylcobinamide-GDP and alpha-ribazole to generate adenosylcobalamin (Ado-cobalamin). Also synthesizes adenosylcobalamin 5'-phosphate from adenosylcobinamide-GDP and alpha-ribazole 5'-phosphate. The protein is Adenosylcobinamide-GDP ribazoletransferase of Ralstonia pickettii (strain 12J).